We begin with the raw amino-acid sequence, 131 residues long: Large ribosomal subunit protein bL12 (131 aa).

This sequence belongs to the bacterial ribosomal protein bL12 family. As to quaternary structure, homodimer. Part of the ribosomal stalk of the 50S ribosomal subunit. Forms a multimeric L10(L12)X complex, where L10 forms an elongated spine to which 2 to 4 L12 dimers bind in a sequential fashion. Binds GTP-bound translation factors.

Forms part of the ribosomal stalk which helps the ribosome interact with GTP-bound translation factors. Is thus essential for accurate translation. This Parasynechococcus marenigrum (strain WH8102) protein is Large ribosomal subunit protein bL12.